The primary structure comprises 75 residues: uncharacterized protein (75 aa).

Residues 1 to 19 form the signal peptide; that stretch reads MKKTAAIISACMLTFALSA. C20 carries N-palmitoyl cysteine lipidation. Residue C20 is the site of S-diacylglycerol cysteine attachment.

It to E.coli YgdR.

The protein resides in the cell membrane. This is an uncharacterized protein from Escherichia coli O6:H1 (strain CFT073 / ATCC 700928 / UPEC).